Consider the following 171-residue polypeptide: Peptide deformylase (171 aa).

Positions 91 and 133 each coordinate Fe cation. Glu134 is a catalytic residue. His137 is a Fe cation binding site.

Belongs to the polypeptide deformylase family. The cofactor is Fe(2+).

The catalysed reaction is N-terminal N-formyl-L-methionyl-[peptide] + H2O = N-terminal L-methionyl-[peptide] + formate. Removes the formyl group from the N-terminal Met of newly synthesized proteins. Requires at least a dipeptide for an efficient rate of reaction. N-terminal L-methionine is a prerequisite for activity but the enzyme has broad specificity at other positions. This chain is Peptide deformylase, found in Hamiltonella defensa subsp. Acyrthosiphon pisum (strain 5AT).